The sequence spans 197 residues: Beta-crystallin A2 (197 aa).

Positions Met1–Pro11 are N-terminal arm. Beta/gamma crystallin 'Greek key' domains follow at residues Ala12–Asn52 and Gly53–Leu99. The connecting peptide stretch occupies residues Cys100 to Asp105. Beta/gamma crystallin 'Greek key' domains follow at residues Ser106–Ser147 and Gly148–Gln196.

This sequence belongs to the beta/gamma-crystallin family. In terms of assembly, homo/heterodimer, or complexes of higher-order. The structure of beta-crystallin oligomers seems to be stabilized through interactions between the N-terminal arms.

Functionally, crystallins are the dominant structural components of the vertebrate eye lens. The protein is Beta-crystallin A2 (CRYBA2) of Bos taurus (Bovine).